Here is a 347-residue protein sequence, read N- to C-terminus: NADH-ubiquinone oxidoreductase chain 2 (347 aa).

The next 11 helical transmembrane spans lie at 3–23 (PLIFTMILLTVMLGTAIVMTT), 25–45 (HWVMAWIGFEMNMLAVIPILM), 59–79 (YFLTQATASMLLMLAIVINLV), 96–116 (IIMTLALAMKLGLAPFHFWVP), 122–142 (VQLSSGLILLTWQKLAPMSIL), 149–169 (INLDLLLLMSLLSILVGGWGG), 178–198 (IMAYSSIAHMGWMTAIMVYNP), 200–220 (MALLNLVIYILLTTTTFMMLM), 240–260 (LTTAILTIMLSLGGLPPLSGF), 276–296 (MIMPTIMAVMALLNLYFYMRL), and 326–346 (LSPLIILSTLILPLSPMLALL).

This sequence belongs to the complex I subunit 2 family. Core subunit of respiratory chain NADH dehydrogenase (Complex I) which is composed of 45 different subunits. Interacts with TMEM242.

It is found in the mitochondrion inner membrane. It carries out the reaction a ubiquinone + NADH + 5 H(+)(in) = a ubiquinol + NAD(+) + 4 H(+)(out). Its function is as follows. Core subunit of the mitochondrial membrane respiratory chain NADH dehydrogenase (Complex I) which catalyzes electron transfer from NADH through the respiratory chain, using ubiquinone as an electron acceptor. Essential for the catalytic activity and assembly of complex I. The protein is NADH-ubiquinone oxidoreductase chain 2 of Nyctimene albiventer (Common tube-nosed fruit bat).